The following is a 91-amino-acid chain: Large ribosomal subunit protein bL27 (91 aa).

The segment at 1–25 (MAHKKGAASSNNGRDSESKRLGVKR) is disordered.

The protein belongs to the bacterial ribosomal protein bL27 family.

The chain is Large ribosomal subunit protein bL27 from Corynebacterium kroppenstedtii (strain DSM 44385 / JCM 11950 / CIP 105744 / CCUG 35717).